The sequence spans 498 residues: MEFSTQSTASLHQIKTAALAVGVYADGELSPAADVIDRASNNAVRQVVKAEFRGRPGATLVLRALPGVSAQRVVLVGLGKQSEYNARAHAAAEQGFAAACVAARITEAVSTLAANSIADTPIRARARSAAIAAGAATYHYDATFGKPDRDARPKLKKIVQVVERGEAAQTQQGLREGSAIAHGMELTRTLGNLPGNVCTPTYLGDTARKLAREFKSLKVEVLDRKQVEALGMGSFLSVARGSDEPLRFIVLRHAGKPAKKSKAGPVVLVGKGITFDAGGISLKPAATMDEMKYDMCGAASVLGTFRALAELELPLDVVGLIAACENLPSGKANKPGDIVTSMSGQTIEILNTDAEGRLVLCDALTYAERFKPSAVVDIATLTGACVVALGHVNTGLFTQDDALADALLAAGRQSLDTAWRMPMDDAYQDQLKSNFADVANIGGPPAGSVTAACFLSRFAKAYRWAHLDIAGTAWRSGKDKGATGRPVPLLMQFLLDQA.

Residues Lys-271 and Asp-276 each coordinate Mn(2+). Lys-283 is an active-site residue. Residues Asp-294, Asp-353, and Glu-355 each coordinate Mn(2+). Arg-357 is an active-site residue.

It belongs to the peptidase M17 family. It depends on Mn(2+) as a cofactor.

The protein localises to the cytoplasm. It catalyses the reaction Release of an N-terminal amino acid, Xaa-|-Yaa-, in which Xaa is preferably Leu, but may be other amino acids including Pro although not Arg or Lys, and Yaa may be Pro. Amino acid amides and methyl esters are also readily hydrolyzed, but rates on arylamides are exceedingly low.. It carries out the reaction Release of an N-terminal amino acid, preferentially leucine, but not glutamic or aspartic acids.. Presumably involved in the processing and regular turnover of intracellular proteins. Catalyzes the removal of unsubstituted N-terminal amino acids from various peptides. The polypeptide is Probable cytosol aminopeptidase (Bordetella petrii (strain ATCC BAA-461 / DSM 12804 / CCUG 43448)).